Reading from the N-terminus, the 315-residue chain is Malate dehydrogenase (315 aa).

NAD(+) is bound by residues 11 to 16 (GAGHVG) and Asp-35. Arg-84 and Arg-90 together coordinate substrate. NAD(+) contacts are provided by residues Asn-97 and 120–122 (VTN). Residues Asn-122 and Arg-153 each contribute to the substrate site. His-177 (proton acceptor) is an active-site residue.

It belongs to the LDH/MDH superfamily. MDH type 3 family.

The enzyme catalyses (S)-malate + NAD(+) = oxaloacetate + NADH + H(+). Its function is as follows. Catalyzes the reversible oxidation of malate to oxaloacetate. The polypeptide is Malate dehydrogenase (Thermosulfidibacter takaii (strain DSM 17441 / JCM 13301 / NBRC 103674 / ABI70S6)).